The sequence spans 268 residues: Fatty acid elongase sre1 (268 aa).

The next 7 helical transmembrane spans lie at 31 to 51, 62 to 82, 110 to 130, 137 to 157, 161 to 181, 198 to 218, and 227 to 247; these read VFPFSTSVIYVLVIFALQAIM, FSIIHNINLIILSFSMMSGVM, IGFWIYIFYLSKYYELVDTVI, PIIFLHIFHHMAMVPVTWQWL, WLVGSWWCTLVNSFIHVLMYY, ITKAQIVQFLTGTAMVSYWFV, and APLSPAIVSNTINSFFIILFG.

This sequence belongs to the ELO family.

It is found in the membrane. It carries out the reaction a very-long-chain acyl-CoA + malonyl-CoA + H(+) = a very-long-chain 3-oxoacyl-CoA + CO2 + CoA. Its function is as follows. Could be implicated in synthesis of very long chain fatty acids. The chain is Fatty acid elongase sre1 (sre1) from Dictyostelium discoideum (Social amoeba).